We begin with the raw amino-acid sequence, 798 residues long: ABC transporter G family member 4 (798 aa).

Positions 1–51 (MEDIGNNNFEIIDDKSDEKNDENFEDKNSRNNINEEQILSNQQQQQQQQQQ) are disordered. Residues 12-29 (IDDKSDEKNDENFEDKNS) show a composition bias toward basic and acidic residues. Positions 30 to 41 (RNNINEEQILSN) are enriched in polar residues. The stretch at 34–83 (NEEQILSNQQQQQQQQQQQQQQQQQQQQQQQQQQQQQQEQQQFKNEVINT) forms a coiled coil. Over residues 42-51 (QQQQQQQQQQ) the composition is skewed to low complexity. The region spanning 211–464 (IDIEDIESQV…SIDSNYKCPP (254 aa)) is the ABC transporter domain. 253–260 (GPSGSGKS) contacts ATP. Transmembrane regions (helical) follow at residues 540–560 (VVFF…SACF), 579–599 (LFFF…STFV), 628–648 (IVSS…IVHL), 656–676 (ILSL…VIAM), 687–707 (FSYC…LVPI), 713–733 (SFGW…IVII), and 771–791 (SIGI…IGLY). The 254-residue stretch at 540-793 (VVFFSKIVIA…ILAYIGLYKF (254 aa)) folds into the ABC transmembrane type-2 domain.

This sequence belongs to the ABC transporter superfamily. ABCG family. Eye pigment precursor importer (TC 3.A.1.204) subfamily.

The protein resides in the membrane. The sequence is that of ABC transporter G family member 4 (abcG4) from Dictyostelium discoideum (Social amoeba).